The sequence spans 111 residues: MANVYDLANELERAVRALPEYQAVLTAKSAIESDADAQVLWQDFLATQSKVQEMMQSGQMPSQEEQDEMSKLGEKIESNDLLKVYFDQQQRLSVYMSDIEKIVFAPMQDLM.

Polar residues predominate over residues 52–63 (QEMMQSGQMPSQ). The segment at 52–71 (QEMMQSGQMPSQEEQDEMSK) is disordered.

It belongs to the UPF0342 family.

The sequence is that of UPF0342 protein SAG1376 from Streptococcus agalactiae serotype V (strain ATCC BAA-611 / 2603 V/R).